The following is a 662-amino-acid chain: Serine/threonine kinase-like domain-containing protein STKLD1 (662 aa).

Positions methionine 1–leucine 202 constitute a Protein kinase domain. ATP contacts are provided by residues leucine 2–asparagine 10 and lysine 25. The tract at residues leucine 639 to proline 662 is disordered.

Belongs to the protein kinase superfamily. Ser/Thr protein kinase family. STKL subfamily.

The protein is Serine/threonine kinase-like domain-containing protein STKLD1 (Stkld1) of Mus musculus (Mouse).